Reading from the N-terminus, the 91-residue chain is DNA-directed RNA polymerase subunit omega (91 aa).

The disordered stretch occupies residues 66 to 91 (QMPPPLPNFPGAANREATGAEDAAGE).

Belongs to the RNA polymerase subunit omega family. The RNAP catalytic core consists of 2 alpha, 1 beta, 1 beta' and 1 omega subunit. When a sigma factor is associated with the core the holoenzyme is formed, which can initiate transcription.

It catalyses the reaction RNA(n) + a ribonucleoside 5'-triphosphate = RNA(n+1) + diphosphate. Functionally, promotes RNA polymerase assembly. Latches the N- and C-terminal regions of the beta' subunit thereby facilitating its interaction with the beta and alpha subunits. In Acidithiobacillus ferrooxidans (strain ATCC 23270 / DSM 14882 / CIP 104768 / NCIMB 8455) (Ferrobacillus ferrooxidans (strain ATCC 23270)), this protein is DNA-directed RNA polymerase subunit omega.